Here is a 211-residue protein sequence, read N- to C-terminus: ATP-dependent Clp protease proteolytic subunit (211 aa).

The active-site Nucleophile is S106. H131 is an active-site residue.

The protein belongs to the peptidase S14 family. In terms of assembly, fourteen ClpP subunits assemble into 2 heptameric rings which stack back to back to give a disk-like structure with a central cavity, resembling the structure of eukaryotic proteasomes.

Its subcellular location is the cytoplasm. The catalysed reaction is Hydrolysis of proteins to small peptides in the presence of ATP and magnesium. alpha-casein is the usual test substrate. In the absence of ATP, only oligopeptides shorter than five residues are hydrolyzed (such as succinyl-Leu-Tyr-|-NHMec, and Leu-Tyr-Leu-|-Tyr-Trp, in which cleavage of the -Tyr-|-Leu- and -Tyr-|-Trp bonds also occurs).. In terms of biological role, cleaves peptides in various proteins in a process that requires ATP hydrolysis. Has a chymotrypsin-like activity. Plays a major role in the degradation of misfolded proteins. The sequence is that of ATP-dependent Clp protease proteolytic subunit from Rhodopseudomonas palustris (strain BisA53).